Reading from the N-terminus, the 205-residue chain is Urease accessory protein UreG (205 aa).

10 to 17 (GPVGSGKT) lines the GTP pocket.

Belongs to the SIMIBI class G3E GTPase family. UreG subfamily. As to quaternary structure, homodimer. UreD, UreF and UreG form a complex that acts as a GTP-hydrolysis-dependent molecular chaperone, activating the urease apoprotein by helping to assemble the nickel containing metallocenter of UreC. The UreE protein probably delivers the nickel.

The protein localises to the cytoplasm. Facilitates the functional incorporation of the urease nickel metallocenter. This process requires GTP hydrolysis, probably effectuated by UreG. This is Urease accessory protein UreG from Corynebacterium urealyticum (strain ATCC 43042 / DSM 7109).